A 778-amino-acid polypeptide reads, in one-letter code: Serine/threonine-protein kinase BRSK1 (778 aa).

A compositionally biased stretch (gly residues) spans 1-12 (MSSGAKEGGGGS). The segment at 1–29 (MSSGAKEGGGGSPAYHLPHPHPHPPQHAQ) is disordered. The Protein kinase domain maps to 34-285 (YRLEKTLGKG…LEQIQKHPWY (252 aa)). Residues 40 to 48 (LGKGQTGLV) and K63 contribute to the ATP site. The active-site Proton acceptor is the D156. T189 is subject to Phosphothreonine; by LKB1. The UBA domain maps to 314–356 (ELDPDVLESMASLGCFRDRERLHRELRSEEENQEKMIYYLLLD). Residues 362–383 (PSCEDQDLPPRNDVDPPRKRVD) show a composition bias toward basic and acidic residues. A disordered region spans residues 362–548 (PSCEDQDLPP…SPGGGVGGAA (187 aa)). Phosphoserine is present on residues S399, S443, S447, and S450. Low complexity predominate over residues 430–457 (SRSVSGASTGLSSSPLSSPRSPVFSFSP). Residues R466, R481, R484, and R498 each carry the omega-N-methylarginine modification. The segment covering 491–508 (QPPPPSARSTPLPGPPGS) has biased composition (pro residues). S508 is modified (phosphoserine). Residues 509–533 (PRSSGGTPLHSPLHTPRASPTGTPG) are compositionally biased toward low complexity. An Omega-N-methylarginine modification is found at R525. 2 positions are modified to phosphothreonine: T529 and T535. R550 carries the post-translational modification Omega-N-methylarginine. Position 583 is a phosphothreonine (T583). 3 positions are modified to phosphoserine: S586, S587, and S601. Positions 719-778 (QPSVQALADEKNGAQTRPAGAPPRSLQPPPGRPDPELSSSPRRGPPKDKKLLATNGTPLP) are disordered.

The protein belongs to the protein kinase superfamily. CAMK Ser/Thr protein kinase family. SNF1 subfamily. It depends on Mg(2+) as a cofactor. Post-translationally, phosphorylated at Thr-189 by STK11/LKB1 in complex with STE20-related adapter-alpha (STRADA) pseudo kinase and CAB39. Not phosphorylated at Thr-189 by CaMKK2. In contrast, it is phosphorylated and activated by CaMKK1. May be inactivated via dephosphorylation of Thr-189 by PP2C. As to expression, widely expressed, with highest levels in brain and testis. Protein levels remain constant throughout the cell cycle.

The protein localises to the cytoplasm. It localises to the nucleus. The protein resides in the cytoskeleton. It is found in the microtubule organizing center. Its subcellular location is the centrosome. The protein localises to the synapse. It localises to the presynaptic active zone. The protein resides in the cytoplasmic vesicle. It is found in the secretory vesicle. Its subcellular location is the synaptic vesicle. It catalyses the reaction L-seryl-[protein] + ATP = O-phospho-L-seryl-[protein] + ADP + H(+). The enzyme catalyses L-threonyl-[protein] + ATP = O-phospho-L-threonyl-[protein] + ADP + H(+). The catalysed reaction is L-seryl-[tau protein] + ATP = O-phospho-L-seryl-[tau protein] + ADP + H(+). It carries out the reaction L-threonyl-[tau protein] + ATP = O-phospho-L-threonyl-[tau protein] + ADP + H(+). Activated by phosphorylation on Thr-189 by STK11/LKB1. Functionally, serine/threonine-protein kinase that plays a key role in polarization of neurons and centrosome duplication. Phosphorylates CDC25B, CDC25C, MAPT/TAU, RIMS1, TUBG1, TUBG2 and WEE1. Following phosphorylation and activation by STK11/LKB1, acts as a key regulator of polarization of cortical neurons, probably by mediating phosphorylation of microtubule-associated proteins such as MAPT/TAU at 'Thr-529' and 'Ser-579'. Also regulates neuron polarization by mediating phosphorylation of WEE1 at 'Ser-642' in postmitotic neurons, leading to down-regulate WEE1 activity in polarized neurons. In neurons, localizes to synaptic vesicles and plays a role in neurotransmitter release, possibly by phosphorylating RIMS1. Also acts as a positive regulator of centrosome duplication by mediating phosphorylation of gamma-tubulin (TUBG1 and TUBG2) at 'Ser-131', leading to translocation of gamma-tubulin and its associated proteins to the centrosome. Involved in the UV-induced DNA damage checkpoint response, probably by inhibiting CDK1 activity through phosphorylation and activation of WEE1, and inhibition of CDC25B and CDC25C. This Homo sapiens (Human) protein is Serine/threonine-protein kinase BRSK1 (BRSK1).